The chain runs to 409 residues: S-adenosylmethionine synthase (409 aa).

Residue His-15 participates in ATP binding. Asp-17 is a Mg(2+) binding site. Glu-43 contributes to the K(+) binding site. Glu-56 and Gln-100 together coordinate L-methionine. The interval 100–110 (QSSDIAQGVNE) is flexible loop. ATP-binding positions include 171–173 (DGK), 248–249 (KF), Asp-257, 263–264 (RK), Ala-280, and Lys-284. Asp-257 contacts L-methionine. Position 288 (Lys-288) interacts with L-methionine.

It belongs to the AdoMet synthase family. As to quaternary structure, homotetramer; dimer of dimers. Mg(2+) is required as a cofactor. K(+) serves as cofactor.

The protein resides in the cytoplasm. The catalysed reaction is L-methionine + ATP + H2O = S-adenosyl-L-methionine + phosphate + diphosphate. It functions in the pathway amino-acid biosynthesis; S-adenosyl-L-methionine biosynthesis; S-adenosyl-L-methionine from L-methionine: step 1/1. Catalyzes the formation of S-adenosylmethionine (AdoMet) from methionine and ATP. The overall synthetic reaction is composed of two sequential steps, AdoMet formation and the subsequent tripolyphosphate hydrolysis which occurs prior to release of AdoMet from the enzyme. This is S-adenosylmethionine synthase from Prochlorococcus marinus (strain NATL1A).